A 430-amino-acid chain; its full sequence is Serine--tRNA ligase (430 aa).

231–233 is an L-serine binding site; the sequence is TSE. Position 262–264 (262–264) interacts with ATP; that stretch reads RSE. Glu-285 provides a ligand contact to L-serine. 349-352 lines the ATP pocket; that stretch reads EISS. Ser-385 contributes to the L-serine binding site.

The protein belongs to the class-II aminoacyl-tRNA synthetase family. Type-1 seryl-tRNA synthetase subfamily. As to quaternary structure, homodimer. The tRNA molecule binds across the dimer.

It localises to the cytoplasm. The enzyme catalyses tRNA(Ser) + L-serine + ATP = L-seryl-tRNA(Ser) + AMP + diphosphate + H(+). It carries out the reaction tRNA(Sec) + L-serine + ATP = L-seryl-tRNA(Sec) + AMP + diphosphate + H(+). It functions in the pathway aminoacyl-tRNA biosynthesis; selenocysteinyl-tRNA(Sec) biosynthesis; L-seryl-tRNA(Sec) from L-serine and tRNA(Sec): step 1/1. Catalyzes the attachment of serine to tRNA(Ser). Is also able to aminoacylate tRNA(Sec) with serine, to form the misacylated tRNA L-seryl-tRNA(Sec), which will be further converted into selenocysteinyl-tRNA(Sec). This Jannaschia sp. (strain CCS1) protein is Serine--tRNA ligase.